Consider the following 122-residue polypeptide: Large ribosomal subunit protein uL14 (122 aa).

The protein belongs to the universal ribosomal protein uL14 family. Part of the 50S ribosomal subunit. Forms a cluster with proteins L3 and L19. In the 70S ribosome, L14 and L19 interact and together make contacts with the 16S rRNA in bridges B5 and B8.

Binds to 23S rRNA. Forms part of two intersubunit bridges in the 70S ribosome. This chain is Large ribosomal subunit protein uL14, found in Halalkalibacterium halodurans (strain ATCC BAA-125 / DSM 18197 / FERM 7344 / JCM 9153 / C-125) (Bacillus halodurans).